Reading from the N-terminus, the 351-residue chain is MMNLISFETPPLGRRSQDGGSSSSSITAATTTTNKAKEAASHLDLSLGISLSPGGGGGDAGTKASSCCYGGGGDGGGCMGSGMLTAGVLGVGHGGSSHDNTTASSGGGGSWTAAFMPSPTGFMHPWSLAARQQKAAAEQERSGVARLPPATTTYMPRAAATVISLPAAVGWPPVHTSRRNLVATINNVLKPDTTAAVKPDRPTQATAMFAADETTAPPPRSAAAATEASRTLNMFAKVHMDGYKVGRKINLRAHRNYDSLRRVLTKMTHNFFCPADYSSTNKGEEDCAKSDEFIFLYEDFEGDRMLVGDVPWELFLASAKRLYIAKNPAPRNKGTYRPLVWICMLLPKAPY.

The segment at 1 to 37 is disordered; that stretch reads MMNLISFETPPLGRRSQDGGSSSSSITAATTTTNKAK. Positions 21–34 are enriched in low complexity; that stretch reads SSSSSITAATTTTN. The PB1 domain maps to 233-327; the sequence is NMFAKVHMDG…SAKRLYIAKN (95 aa).

This sequence belongs to the Aux/IAA family. In terms of assembly, homodimers and heterodimers. As to expression, expressed in roots and seedlings.

The protein resides in the nucleus. Aux/IAA proteins are short-lived transcriptional factors that function as repressors of early auxin response genes at low auxin concentrations. This Oryza sativa subsp. japonica (Rice) protein is Auxin-responsive protein IAA27 (IAA27).